A 252-amino-acid chain; its full sequence is Phosphoribosyl-ATP pyrophosphatase (252 aa).

It belongs to the PRA-PH family.

It localises to the cytoplasm. It carries out the reaction 1-(5-phospho-beta-D-ribosyl)-ATP + H2O = 1-(5-phospho-beta-D-ribosyl)-5'-AMP + diphosphate + H(+). Its pathway is amino-acid biosynthesis; L-histidine biosynthesis; L-histidine from 5-phospho-alpha-D-ribose 1-diphosphate: step 2/9. This Magnetococcus marinus (strain ATCC BAA-1437 / JCM 17883 / MC-1) protein is Phosphoribosyl-ATP pyrophosphatase.